Reading from the N-terminus, the 137-residue chain is Small ribosomal subunit protein bS6 (137 aa).

Positions 96–137 (VTEQSIMLKQKEERAERAPRRDDREERAPRREEEAKPEAAAE) are disordered. Residues 104 to 137 (KQKEERAERAPRRDDREERAPRREEEAKPEAAAE) are compositionally biased toward basic and acidic residues.

This sequence belongs to the bacterial ribosomal protein bS6 family.

Binds together with bS18 to 16S ribosomal RNA. The polypeptide is Small ribosomal subunit protein bS6 (Vibrio atlanticus (strain LGP32) (Vibrio splendidus (strain Mel32))).